We begin with the raw amino-acid sequence, 296 residues long: Bifunctional protein FolD (296 aa).

Residues 166 to 168 (GRS), Ser-195, and Thr-236 each bind NADP(+).

The protein belongs to the tetrahydrofolate dehydrogenase/cyclohydrolase family. In terms of assembly, homodimer.

It catalyses the reaction (6R)-5,10-methylene-5,6,7,8-tetrahydrofolate + NADP(+) = (6R)-5,10-methenyltetrahydrofolate + NADPH. It carries out the reaction (6R)-5,10-methenyltetrahydrofolate + H2O = (6R)-10-formyltetrahydrofolate + H(+). The protein operates within one-carbon metabolism; tetrahydrofolate interconversion. Functionally, catalyzes the oxidation of 5,10-methylenetetrahydrofolate to 5,10-methenyltetrahydrofolate and then the hydrolysis of 5,10-methenyltetrahydrofolate to 10-formyltetrahydrofolate. The polypeptide is Bifunctional protein FolD (Dehalococcoides mccartyi (strain CBDB1)).